We begin with the raw amino-acid sequence, 414 residues long: 2,3-diketo-5-methylthiopentyl-1-phosphate enolase (414 aa).

Lysine 99 (proton acceptor) is an active-site residue. Substrate is bound by residues lysine 148, 174 to 177 (KDDE), histidine 265, glycine 338, and 360 to 361 (GG). Positions 174, 176, and 177 each coordinate Mg(2+). The residue at position 174 (lysine 174) is an N6-carboxylysine.

Belongs to the RuBisCO large chain family. Type IV subfamily. As to quaternary structure, homodimer. Requires Mg(2+) as cofactor.

The catalysed reaction is 5-methylsulfanyl-2,3-dioxopentyl phosphate = 2-hydroxy-5-methylsulfanyl-3-oxopent-1-enyl phosphate. The protein operates within amino-acid biosynthesis; L-methionine biosynthesis via salvage pathway; L-methionine from S-methyl-5-thio-alpha-D-ribose 1-phosphate: step 3/6. Catalyzes the enolization of 2,3-diketo-5-methylthiopentyl-1-phosphate (DK-MTP-1-P) into 2-hydroxy-3-keto-5-methylthiopentenyl-1-phosphate (HK-MTPenyl-1-P). This Bacillus mycoides (strain KBAB4) (Bacillus weihenstephanensis) protein is 2,3-diketo-5-methylthiopentyl-1-phosphate enolase.